A 391-amino-acid polypeptide reads, in one-letter code: UPF0229 protein CLH_2838 (391 aa).

Disordered regions lie at residues 1-23 (MAIFRDRTDKQVDHDRAIEDKRR) and 75-107 (VATGTGEEKRGDKIESGSKKAMGKGNKGAGNEE). Basic and acidic residues predominate over residues 80–92 (GEEKRGDKIESGS).

It belongs to the UPF0229 family.

This is UPF0229 protein CLH_2838 from Clostridium botulinum (strain Alaska E43 / Type E3).